The primary structure comprises 509 residues: 5-OH-xanthotoxin synthase (509 aa).

Residues 5–25 (AVVILLILAFPIASVYVLFYH) traverse the membrane as a helical segment. The interval 368–373 (TGALLI) is substrate specificity. C449 serves as a coordination point for heme.

It belongs to the cytochrome P450 family. Requires heme as cofactor.

Its subcellular location is the microsome membrane. It catalyses the reaction xanthotoxin + reduced [NADPH--hemoprotein reductase] + O2 = 5-hydroxyxanthotoxin + oxidized [NADPH--hemoprotein reductase] + H2O + 2 H(+). Its pathway is secondary metabolite biosynthesis. Involved in the biosynthesis of coumarins and furanocoumarins (FCs), natural products required for defense responses against attacks by predators with potential medical and agroindustrial usages such as anticoagulant, rodenticide and artificial vanilla substitutes. Catalyzes the conversion of xanthotoxin into 5-hydroxyxanthotoxin. This is 5-OH-xanthotoxin synthase from Ammi majus (Bishop's weed).